A 257-amino-acid chain; its full sequence is Golgi SNAP receptor complex member 1-2 (257 aa).

Residues 1–235 (MTESSLDLQE…GSIKRKRSRD (235 aa)) lie on the Cytoplasmic side of the membrane. Asn51 is subject to Phosphoserine. A coiled-coil region spans residues 113–147 (TQKLARHRDILHEYTQEFRRIKGNINSLREHAELL). A helical; Anchor for type IV membrane protein transmembrane segment spans residues 236–256 (TLILSAVIAACTLFLIIYWLS). A topological domain (vesicular) is located at residue Lys257.

It belongs to the GOSR1 family. In terms of assembly, component of several multiprotein Golgi SNARE complexes.

The protein resides in the golgi apparatus membrane. It is found in the endoplasmic reticulum membrane. In terms of biological role, involved in transport from the ER to the Golgi apparatus as well as in intra-Golgi transport. It belongs to a super-family of proteins called t-SNAREs or soluble NSF (N-ethylmaleimide-sensitive factor) attachment protein receptor. This Arabidopsis thaliana (Mouse-ear cress) protein is Golgi SNAP receptor complex member 1-2 (GOS12).